The primary structure comprises 498 residues: Nucleobase transporter PlAzg2 (498 aa).

Transmembrane regions (helical) follow at residues 88–108 (LLAG…NSSI), 118–138 (AGII…GLWG), 142–162 (LVIV…VQGM), 169–189 (ALAA…TSLV), 203–223 (AISV…GGVI), 236–256 (FADP…ILYI), 259–279 (VPGN…LFKA), 312–332 (TLVI…VGLI), 357–377 (ILSG…AAGI), 388–408 (IATG…TLVP), 412–432 (VAPI…HISF), 443–463 (FIIA…IGFI), and 478–498 (VKPL…LQTM).

It belongs to the nucleobase:cation symporter-2 (NCS2) (TC 2.A.40) family. Azg-like subfamily.

It is found in the cell membrane. With respect to regulation, inhibited by the proton gradient disruptor carbonyl cyanide m-chlorophenylhydrazone (CCCP), but not by the sodium gradient disruptor ouabain. In terms of biological role, transports adenine, guanine, hypoxanthine, xanthine, cytosine and uracil. Transport is probably proton-dependent. The sequence is that of Nucleobase transporter PlAzg2 from Paenibacillus larvae subsp. larvae (strain NRRL B-3650 / LMG 16245).